Here is a 291-residue protein sequence, read N- to C-terminus: Meiosis-specific protein SPO13 (291 aa).

3 disordered regions span residues 1–30 (MAPR…QEKT), 116–143 (SFDN…QSSQ), and 271–291 (CSDY…SSLN). The Nuclear localization signal signature appears at 3–6 (PRKR). Residues 116–125 (SFDNSLRFED) are compositionally biased toward basic and acidic residues. Polar residues predominate over residues 130–143 (PKSTSTPVLSQSSQ).

The protein localises to the nucleus. In terms of biological role, required for meiosis I segmentation. Probably acts as a regulator of kinetochore function during meiosis I: required both for mono-orientation of kinetochores on sister chromosomes and protection of centromeric cohesin from separase-mediated cleavage. The protein is Meiosis-specific protein SPO13 (SPO13) of Saccharomyces cerevisiae (strain ATCC 204508 / S288c) (Baker's yeast).